The sequence spans 334 residues: UstYa family oxidase aprY (334 aa).

Residues 55-75 (IWILLTITNLIILGITVSMIV) traverse the membrane as a helical segment. Asn112 carries N-linked (GlcNAc...) asparagine glycosylation. The HXXHC 1 motif lies at 185–189 (HQIHC). N-linked (GlcNAc...) asparagine glycosylation is present at Asn214. The HXXHC 2 signature appears at 223–227 (HLGHC). The span at 306–318 (SELGEKLGKHQKQ) shows a compositional bias: basic and acidic residues. Residues 306 to 334 (SELGEKLGKHQKQEGVLGQAGHQHTKRHE) are disordered.

Belongs to the ustYa family.

The protein resides in the membrane. Its pathway is secondary metabolite biosynthesis. UstYa family oxidase; part of the gene cluster that mediates the biosynthesis of the asperipin-2a, a bicyclic peptide that possesses two macrocyclic ether rings consisting of 14- and 17-membered paracyclophans. Within the pathway, aprY is responsible for the synthesis of the bicyclic structure of asperipin-2a. The pathway starts with the processing of the precursor aprA by kexin proteases to produce 11 identical copies of the hexapeptide Phe-Tyr-Tyr-Thr-Gly-Tyr. Macrocyclization of asperipin-2a may accompany an alpha-hydroxylation-dehydration sequence to give an imine, which is readily hydrolyzed to yield putative ketone intermediate. The reductase aprR may be required for the final reduction to yield asperipin-2a. This chain is UstYa family oxidase aprY, found in Aspergillus flavus (strain ATCC 200026 / FGSC A1120 / IAM 13836 / NRRL 3357 / JCM 12722 / SRRC 167).